Here is a 132-residue protein sequence, read N- to C-terminus: Small ribosomal subunit protein uS8 (132 aa).

The protein belongs to the universal ribosomal protein uS8 family. As to quaternary structure, part of the 30S ribosomal subunit. Contacts proteins S5 and S12.

One of the primary rRNA binding proteins, it binds directly to 16S rRNA central domain where it helps coordinate assembly of the platform of the 30S subunit. The protein is Small ribosomal subunit protein uS8 of Clavibacter michiganensis subsp. michiganensis (strain NCPPB 382).